A 208-amino-acid polypeptide reads, in one-letter code: Ribosomal RNA large subunit methyltransferase E (208 aa).

5 residues coordinate S-adenosyl-L-methionine: G63, W65, D83, D99, and D124. Catalysis depends on K164, which acts as the Proton acceptor.

The protein belongs to the class I-like SAM-binding methyltransferase superfamily. RNA methyltransferase RlmE family.

It localises to the cytoplasm. It catalyses the reaction uridine(2552) in 23S rRNA + S-adenosyl-L-methionine = 2'-O-methyluridine(2552) in 23S rRNA + S-adenosyl-L-homocysteine + H(+). In terms of biological role, specifically methylates the uridine in position 2552 of 23S rRNA at the 2'-O position of the ribose in the fully assembled 50S ribosomal subunit. The chain is Ribosomal RNA large subunit methyltransferase E from Blochmanniella pennsylvanica (strain BPEN).